The sequence spans 255 residues: Syntaxin-6 (255 aa).

Residue Ser2 is modified to N-acetylserine. At Ser2 the chain carries Phosphoserine. The segment at 2–168 is required for interaction with VPS51; sequence SMEDPFFVVK…QAQQQLIVEQ (167 aa). Over 2-234 the chain is Cytoplasmic; the sequence is SMEDPFFVVK…VSHMTSDRRQ (233 aa). Positions 41–74 form a coiled coil; the sequence is EEIDWTTNELRNNLRSIEWDLEDLDETISIVEAN. Phosphoserine is present on residues Ser129 and Ser152. The t-SNARE coiled-coil homology domain occupies 163–225; that stretch reads QLIVEQQDEQ…DNVMKKLAKV (63 aa). Residues 235-255 traverse the membrane as a helical; Anchor for type IV membrane protein segment; it reads WCAIAILFAVLLVVLILFLVL.

The protein belongs to the syntaxin family. As to quaternary structure, identified in a complex containing STX6, STX12, VAMP4 and VTI1A. Binds EEA1. Interacts with VPS45A. Interacts with MARCHF2; the interaction promotes MARCHF2-mediated ubiquitination and degradation of CFTR. Interacts with MARCHF3. Interacts with GOPC. Interacts with BLTP3B (via C-terminal coiled-coil domain). Interacts with BAIAP3; this interaction is increased in the presence of calcium. Interacts with VPS13B.

The protein localises to the golgi apparatus membrane. The protein resides in the golgi apparatus. It is found in the trans-Golgi network membrane. Its subcellular location is the recycling endosome membrane. In terms of biological role, SNARE promoting movement of transport vesicles to target membranes. Targets endosomes to the trans-Golgi network, and may therefore function in retrograde trafficking. Together with SNARE STX12, promotes movement of vesicles from endosomes to the cell membrane, and may therefore function in the endocytic recycling pathway. This chain is Syntaxin-6 (STX6), found in Homo sapiens (Human).